We begin with the raw amino-acid sequence, 150 residues long: Catabolic 3-dehydroquinase (150 aa).

Tyr24 (proton acceptor) is an active-site residue. Residues Asn75, His81, and Asp88 each contribute to the substrate site. The active-site Proton donor is His101. Substrate contacts are provided by residues 102-103 (IS) and Arg112.

It belongs to the type-II 3-dehydroquinase family. As to quaternary structure, homododecamer. Adopts a ring-like structure, composed of an arrangement of two hexameric rings stacked on top of one another.

The enzyme catalyses 3-dehydroquinate = 3-dehydroshikimate + H2O. It participates in aromatic compound metabolism; 3,4-dihydroxybenzoate biosynthesis; 3,4-dihydroxybenzoate from 3-dehydroquinate: step 1/2. Its function is as follows. Is involved in the catabolism of quinate. Allows the utilization of quinate as carbon source via the beta-ketoadipate pathway. The polypeptide is Catabolic 3-dehydroquinase (Verticillium alfalfae (strain VaMs.102 / ATCC MYA-4576 / FGSC 10136) (Verticillium wilt of alfalfa)).